The chain runs to 873 residues: Mitogen-activated protein kinase kinase kinase kinase 3 (873 aa).

Methionine 1 is modified (N-acetylmethionine). The Protein kinase domain occupies 16–273 (FELIQRIGSG…AEKLLQHPFV (258 aa)). Residues 22-30 (IGSGTYGDV) and lysine 45 contribute to the ATP site. Catalysis depends on aspartate 136, which acts as the Proton acceptor. A phosphoserine mark is found at serine 329 and serine 377. Positions 389–518 (AHLEDDEGDD…KPISNGLPPT (130 aa)) are disordered. Positions 452–466 (HVPPRPPPPRLPPQK) are enriched in pro residues. The span at 487–499 (VHQQQSEQRGTNL) shows a compositional bias: polar residues. One can recognise a CNH domain in the interval 535-846 (PLKIHCATSW…IFRLLGSDRV (312 aa)).

This sequence belongs to the protein kinase superfamily. STE Ser/Thr protein kinase family. STE20 subfamily. In terms of assembly, interacts with SH3GL2. Interaction appears to regulate MAP4K3-mediated JNK activation. Mg(2+) is required as a cofactor.

The catalysed reaction is L-seryl-[protein] + ATP = O-phospho-L-seryl-[protein] + ADP + H(+). The enzyme catalyses L-threonyl-[protein] + ATP = O-phospho-L-threonyl-[protein] + ADP + H(+). Functionally, serine/threonine kinase that plays a role in the response to environmental stress. Appears to act upstream of the JUN N-terminal pathway. Activator of the Hippo signaling pathway which plays a pivotal role in organ size control and tumor suppression by restricting proliferation and promoting apoptosis. MAP4Ks act in parallel to and are partially redundant with STK3/MST2 and STK4/MST2 in the phosphorylation and activation of LATS1/2, and establish MAP4Ks as components of the expanded Hippo pathway. This is Mitogen-activated protein kinase kinase kinase kinase 3 (Map4k3) from Rattus norvegicus (Rat).